A 181-amino-acid polypeptide reads, in one-letter code: Protein Syd (181 aa).

It belongs to the Syd family.

It is found in the cell inner membrane. Its function is as follows. Interacts with the SecY protein in vivo. May bind preferentially to an uncomplexed state of SecY, thus functioning either as a chelating agent for excess SecY in the cell or as a regulatory factor that negatively controls the translocase function. This chain is Protein Syd, found in Enterobacter sp. (strain 638).